Consider the following 510-residue polypeptide: Bifunctional pantoate ligase/cytidylate kinase (510 aa).

The segment at 1 to 276 (MKKVIIRKTE…CGETRLIDHV (276 aa)) is pantoate--beta-alanine ligase. An ATP-binding site is contributed by 29–36 (MGNLHNGH). Histidine 36 acts as the Proton donor in catalysis. Glutamine 61 is a binding site for (R)-pantoate. Residue glutamine 61 participates in beta-alanine binding. 150–153 (GEKD) contacts ATP. Glutamine 156 serves as a coordination point for (R)-pantoate. ATP is bound at residue 187 to 190 (LSSR). Residues 277–510 (FLMKRRPIIA…DKIPKETEIK (234 aa)) are cytidylate kinase.

This sequence in the N-terminal section; belongs to the pantothenate synthetase family. In the C-terminal section; belongs to the cytidylate kinase family. Type 1 subfamily.

It localises to the cytoplasm. It catalyses the reaction (R)-pantoate + beta-alanine + ATP = (R)-pantothenate + AMP + diphosphate + H(+). The enzyme catalyses CMP + ATP = CDP + ADP. The catalysed reaction is dCMP + ATP = dCDP + ADP. Its pathway is cofactor biosynthesis; (R)-pantothenate biosynthesis; (R)-pantothenate from (R)-pantoate and beta-alanine: step 1/1. In terms of biological role, catalyzes the condensation of pantoate with beta-alanine in an ATP-dependent reaction via a pantoyl-adenylate intermediate. Its function is as follows. Catalyzes the transfer of a phosphate group from ATP to either CMP or dCMP to form CDP or dCDP and ADP, respectively. The protein is Bifunctional pantoate ligase/cytidylate kinase of Prochlorococcus marinus (strain MIT 9215).